We begin with the raw amino-acid sequence, 239 residues long: Lipid transferase CIDEC (239 aa).

A required for liquid-liquid phase separation (LLPS) region spans residues 1–35 (MDYAMKSLSLLYPRSLSRHVAVSTAVVTQQLVSKP). One can recognise a CIDE-N domain in the interval 41-118 (RARPCRVSTA…VLLKGQKWKP (78 aa)). An RKKR polybasic motif motif is present at residues 123–126 (RKKR).

It belongs to the CIDE family. In terms of assembly, homodimer. Homooligomer; undergoes liquid-liquid phase separation (LLPS) via its N-terminus, facilitating lipid droplet fusion, occurs at the lipid droplet contact sites. Interacts with CIDEA. Interacts with PLIN1. Interacts with NFAT5; this interaction is direct and retains NFAT5 in the cytoplasm. Interacts with CEBPB. Interacts with isoform CLSTN3beta of CLSTN3; inhibiting the lipid transferase activity of CIDEC. Post-translationally, ubiquitinated and targeted to proteasomal degradation, resulting in a short half-life (about 15 minutes in 3T3-L1 cells). Protein stability depends on triaclyglycerol synthesis, fatty acid availability and lipid droplet formation. In terms of tissue distribution, expressed almost exclusively in adipose tissue, including subcutaneous and epididymal white adipose tissue (at protein level). Although abundantly present in brown adipose tissue at the mRNA level, the protein is almost undetectable in this tissue, or at moderate levels. Expressed in the mammary gland, in stromal adipose tissue, but becomes undetectable at the end of pregnancy and during lactation (at protein level). Expressed at low levels in skeletal muscle and heart.

It is found in the lipid droplet. It localises to the endoplasmic reticulum. The protein resides in the nucleus. It catalyses the reaction a triacyl-sn-glycerol(in) = a triacyl-sn-glycerol(out). Its function is as follows. Lipid transferase specifically expressed in white adipose tissue, which promotes unilocular lipid droplet formation by mediating lipid droplet fusion. Lipid droplet fusion promotes their enlargement, restricting lipolysis and favoring lipid storage. Localizes on the lipid droplet surface, at focal contact sites between lipid droplets, and mediates atypical lipid droplet fusion by undergoing liquid-liquid phase separation (LLPS) and promoting directional net neutral lipid transfer from the smaller to larger lipid droplets. The transfer direction may be driven by the internal pressure difference between the contacting lipid droplet pair. Its role in neutral lipid transfer and lipid droplet enlargement is activated by the interaction with PLIN1. May also act as a CEBPB coactivator in the white adipose tissue to control the expression of a subset of CEBPB downstream target genes, including SOCS1, SOCS3, TGFB1, TGFBR1, ID2 and XDH. When overexpressed in preadipocytes, induces apoptosis or increases cell susceptibility to apoptosis induced by serum deprivation or TGFB treatment. The protein is Lipid transferase CIDEC of Mus musculus (Mouse).